Consider the following 553-residue polypeptide: MTREGFVPWPKEAADRYREAGYWRGRPLGSYLHEWAETYGDTVAVVDGDTRLTYRQLVDRADGLACRLLDSGLNPGDAMLVQLPNGWEFVTLTLACLRAGIAPVMAMPAHRGHELRYLAAHAEVTSIAVPDRLGDFDHQALGREVAEDTPSVGLLLVAGGTVGTDATDLRALAEPADDPVTARARLDRIAPDSGDIAVFLLSGGTTGLPKLITRTHDDYEYNARRSAEVCGLDSDSVYLVALPAGHNFPLACPGILGTLMNGGRVVLARTPEPGKVLPLMAAEGVTATAAVPAVVQRWIDAVASGRHPAPPALRLLQVGGARLAPEVARRAEPVLGGTLQQVFGMAEGLLNYTRPDDPDDIKIETQGRPMCPDDEILVVDASDNPVPPGEMGALLTRGPYTPRGYYRAAEHNARAFTPDGWYRTGDVVRLHPSGNLVVEGRDKDLINRGGEKISAEEVENLIYRLPGVARVAAVAKADPDLGERVCAVVVVEPGTQLSLESVRAALTAMQVARYKLPEDLLVVDELPLTKVGKIDKKRLRDVVRGKADSVEAV.

An ATP-binding site is contributed by Gly203. 246–247 (HN) serves as a coordination point for substrate. Residues Gly320, Val342, Asp426, Arg441, and Lys533 each contribute to the ATP site. Residue Lys533 participates in substrate binding.

Belongs to the ATP-dependent AMP-binding enzyme family.

It carries out the reaction salicylate + ATP + CoA = 2-hydroxybenzoyl-CoA + AMP + diphosphate. Involved in the degradation of salicylate via a pathway involving coenzyme A derivative. Catalyzes the conversion of salicylate to salicyloyl-CoA via the formation of a salicylate-adenylate intermediate. The substrate specificity is strong, since benzoate, 3-hydroxybenzoate, 4-hydroxybenzoate, gentisate, 2-aminobenzoate, aminobenzoate, salicylamide, salicylaldoxime and 2-hydroxyphenyl acetate cannot substitute for salicylate. This Streptomyces sp protein is Salicylyl-CoA synthase / salicylate adenylyltransferase.